A 364-amino-acid polypeptide reads, in one-letter code: Lytic cellulose monooxygenase (364 aa).

An N-terminal signal peptide occupies residues Met-1–Ala-34. Residues His-35 and His-144 each contribute to the Cu cation site. In terms of domain architecture, Chitin-binding type-4 spans His-35 to Val-225. Residues Val-234 to His-261 are disordered. Residues Thr-245 to Thr-260 are compositionally biased toward pro residues. The CBM2 domain maps to Pro-258–Pro-364.

The cofactor is Cu(2+).

The protein localises to the secreted. The catalysed reaction is [(1-&gt;4)-beta-D-glucosyl]n+m + reduced acceptor + O2 = [(1-&gt;4)-beta-D-glucosyl]m-1-(1-&gt;4)-D-glucono-1,5-lactone + [(1-&gt;4)-beta-D-glucosyl]n + acceptor + H2O.. Its pathway is glycan metabolism; cellulose degradation. Involved in the degradation of lignocellulosic biomass. Catalyzes the oxidative cleavage of glycosidic bonds in cellulosic substrates via a copper-dependent mechanism. Degrades phosphoric acid swollen cellulose (PASC) to oxidized cellooligosaccharides with degrees of polymerization of 4-8. Also shows activity on agricultural fiber paper pulps such as flax pulp. Is not active on chitin. The protein is Lytic cellulose monooxygenase of Streptomyces ambofaciens (strain ATCC 23877 / 3486 / DSM 40053 / JCM 4204 / NBRC 12836 / NRRL B-2516).